Here is a 406-residue protein sequence, read N- to C-terminus: Protein PHYTOCHROME KINASE SUBSTRATE 4 (406 aa).

A compositionally biased stretch (polar residues) spans 106 to 119 (SWNSQTGLLSNKNR). Residues 106 to 133 (SWNSQTGLLSNKNRQGSDRDGRRSSKKG) form a disordered region.

Belongs to the PKS family. In terms of assembly, interacts in vitro with PHYA and PHYB. As to expression, expressed in the hypocotyl elongation zone. Not found in the root elongation zone.

Functionally, modulates phytochrome-mediated control of hypocotyl growth orientation. Involved in PHYA and PHYB signaling. Acts as an inhibitor of asymmetric growth. Not involved in the control of leaf flattening. The sequence is that of Protein PHYTOCHROME KINASE SUBSTRATE 4 (PKS4) from Arabidopsis thaliana (Mouse-ear cress).